The chain runs to 654 residues: Threonine--tRNA ligase (654 aa).

The TGS domain maps to 1–63; the sequence is MAQISLTFPD…DADASIAIHT (63 aa). Residues 247 to 544 are catalytic; it reads DHRKLGREMN…LIENFAGKLP (298 aa). The Zn(2+) site is built by cysteine 344, histidine 395, and histidine 521.

This sequence belongs to the class-II aminoacyl-tRNA synthetase family. In terms of assembly, homodimer. The cofactor is Zn(2+).

It is found in the cytoplasm. It catalyses the reaction tRNA(Thr) + L-threonine + ATP = L-threonyl-tRNA(Thr) + AMP + diphosphate + H(+). In terms of biological role, catalyzes the attachment of threonine to tRNA(Thr) in a two-step reaction: L-threonine is first activated by ATP to form Thr-AMP and then transferred to the acceptor end of tRNA(Thr). Also edits incorrectly charged L-seryl-tRNA(Thr). In Dinoroseobacter shibae (strain DSM 16493 / NCIMB 14021 / DFL 12), this protein is Threonine--tRNA ligase.